A 199-amino-acid chain; its full sequence is Nucleoid occlusion factor SlmA (199 aa).

In terms of domain architecture, HTH tetR-type spans R10–L71. The H-T-H motif DNA-binding region spans T34 to F53. The stretch at N120–V140 forms a coiled coil.

It belongs to the nucleoid occlusion factor SlmA family. As to quaternary structure, homodimer. Interacts with FtsZ.

It localises to the cytoplasm. Its subcellular location is the nucleoid. Functionally, required for nucleoid occlusion (NO) phenomenon, which prevents Z-ring formation and cell division over the nucleoid. Acts as a DNA-associated cell division inhibitor that binds simultaneously chromosomal DNA and FtsZ, and disrupts the assembly of FtsZ polymers. SlmA-DNA-binding sequences (SBS) are dispersed on non-Ter regions of the chromosome, preventing FtsZ polymerization at these regions. This is Nucleoid occlusion factor SlmA from Photorhabdus laumondii subsp. laumondii (strain DSM 15139 / CIP 105565 / TT01) (Photorhabdus luminescens subsp. laumondii).